The sequence spans 778 residues: Protein SPT2 homolog (778 aa).

3 disordered regions span residues 1–21, 50–625, and 639–685; these read MDFHSVLKMAAAKPGSDGIAK, KKDE…AKPK, and VPKS…DDDD. The interval 1-665 is important for interaction with DNA; it reads MDFHSVLKMA…PGHRPAMRPP (665 aa). Positions 44–83 form a coiled coil; it reads VQAFLRKKDEESRRKETVEKRKKEDLLAKRKELKHDRKAR. Basic and acidic residues predominate over residues 50-78; the sequence is KKDEESRRKETVEKRKKEDLLAKRKELKH. Over residues 114 to 135 the composition is skewed to acidic residues; the sequence is EEDQNDNMAAEGEEYMTEEELY. Residues 153–167 show a composition bias toward pro residues; the sequence is QKVPKPAPGKKPPTP. Over residues 190 to 227 the composition is skewed to basic and acidic residues; it reads RPVKKEERLRTAEELKELEFLERKAQKADRKDPKRNEQ. The stretch at 193-221 forms a coiled coil; that stretch reads KKEERLRTAEELKELEFLERKAQKADRKD. Positions 242–269 are enriched in polar residues; sequence LKGTHSGNSKSSSTEQNGTIRKSSSDTG. Over residues 270–286 the composition is skewed to basic and acidic residues; that stretch reads SRTEKSGSVFHTKESKK. Residues 312 to 335 are compositionally biased toward low complexity; that stretch reads SSQPSAASNSAFGRPSGSARPSGS. Composition is skewed to gly residues over residues 336–357 and 365–384; these read SGPGRPLGGSGSSSGKSTGGSA and GGSGSGSGKPMGGSGSGKPI. Residues 385–394 are compositionally biased toward low complexity; sequence GGLHSSHGSG. Over residues 395–417 the composition is skewed to gly residues; it reads KPTGGTGSGSGKPTGASGSGSGK. Low complexity-rich tracts occupy residues 418 to 493 and 506 to 559; these read PTGS…SGSA and GSGS…PSSS. The span at 588–604 shows a compositional bias: polar residues; it reads VRPNSTSVPGSARSSLG. Over residues 662–671 the composition is skewed to pro residues; it reads MRPPGPPLPP. The important for interaction with histones stretch occupies residues 666-778; it reads GPPLPPITSS…QLKAAKKMSR (113 aa). Positions 735-778 form a coiled coil; the sequence is REQQKEEARSLRLGIQEDLEELQREEEELKRKAKQLKAAKKMSR.

It belongs to the SPT2 family. As to quaternary structure, interacts with histones. Interacts with a heterotetrameric complex formed by histone H3 and H4, especially when the histone tetramer is not bound to DNA.

The protein resides in the nucleus. Its subcellular location is the nucleolus. Functionally, histone chaperone that stabilizes pre-existing histone tetramers and regulates replication-independent histone exchange on chromatin. Required for normal chromatin refolding in the coding region of transcribed genes, and for the suppression of spurious transcription. Binds DNA and histones and promotes nucleosome assembly (in vitro). Facilitates formation of tetrameric histone complexes containing histone H3 and H4. Modulates RNA polymerase 1-mediated transcription. Binds DNA, with a preference for branched DNA species, such as Y-form DNA and Holliday junction DNA. This chain is Protein SPT2 homolog (spty2d1), found in Xenopus tropicalis (Western clawed frog).